A 483-amino-acid chain; its full sequence is Phosphomethylpyrimidine synthase (483 aa).

Residues N97, M126, Y156, H192, 212–214 (SRG), 253–256 (DSLR), and E292 each bind substrate. H296 is a Zn(2+) binding site. Y319 provides a ligand contact to substrate. H360 is a binding site for Zn(2+). Positions 440, 443, and 448 each coordinate [4Fe-4S] cluster.

It belongs to the ThiC family. It depends on [4Fe-4S] cluster as a cofactor.

The enzyme catalyses 5-amino-1-(5-phospho-beta-D-ribosyl)imidazole + S-adenosyl-L-methionine = 4-amino-2-methyl-5-(phosphooxymethyl)pyrimidine + CO + 5'-deoxyadenosine + formate + L-methionine + 3 H(+). Its pathway is cofactor biosynthesis; thiamine diphosphate biosynthesis. Catalyzes the synthesis of the hydroxymethylpyrimidine phosphate (HMP-P) moiety of thiamine from aminoimidazole ribotide (AIR) in a radical S-adenosyl-L-methionine (SAM)-dependent reaction. This is Phosphomethylpyrimidine synthase from Parasynechococcus marenigrum (strain WH8102).